Consider the following 199-residue polypeptide: Imidazole glycerol phosphate synthase subunit HisH 2 (199 aa).

The region spanning 1-199 (MIAVIDVSGN…NNFLSLESKC (199 aa)) is the Glutamine amidotransferase type-1 domain. Cys76 functions as the Nucleophile in the catalytic mechanism. Catalysis depends on residues His177 and Glu179.

Heterodimer of HisH and HisF.

The protein localises to the cytoplasm. It carries out the reaction 5-[(5-phospho-1-deoxy-D-ribulos-1-ylimino)methylamino]-1-(5-phospho-beta-D-ribosyl)imidazole-4-carboxamide + L-glutamine = D-erythro-1-(imidazol-4-yl)glycerol 3-phosphate + 5-amino-1-(5-phospho-beta-D-ribosyl)imidazole-4-carboxamide + L-glutamate + H(+). It catalyses the reaction L-glutamine + H2O = L-glutamate + NH4(+). Its pathway is amino-acid biosynthesis; L-histidine biosynthesis; L-histidine from 5-phospho-alpha-D-ribose 1-diphosphate: step 5/9. Functionally, IGPS catalyzes the conversion of PRFAR and glutamine to IGP, AICAR and glutamate. The HisH subunit provides the glutamine amidotransferase activity that produces the ammonia necessary to HisF for the synthesis of IGP and AICAR. This chain is Imidazole glycerol phosphate synthase subunit HisH 2, found in Legionella pneumophila (strain Lens).